Reading from the N-terminus, the 137-residue chain is DNA-binding protein H-NS (137 aa).

The DNA-binding element occupies 112–117 (QGRTPA).

The protein belongs to the histone-like protein H-NS family. In terms of assembly, homodimer that oligomerizes on DNA into higher-order complexes that form bridges between disparate regions of DNA compacting it. Interacts with Hha, Cnu and StpA.

It localises to the cytoplasm. Its subcellular location is the nucleoid. Functionally, a DNA-binding protein implicated in transcriptional repression and chromosome organization and compaction. Binds nucleation sites in AT-rich DNA and bridges them, forming higher-order nucleoprotein complexes and condensing the chromosome. As many horizontally transferred genes are AT-rich, it plays a central role in silencing foreign genes. A subset of genes are repressed by H-NS in association with other proteins. In Escherichia coli O6:H1 (strain CFT073 / ATCC 700928 / UPEC), this protein is DNA-binding protein H-NS (hns).